A 413-amino-acid polypeptide reads, in one-letter code: Arginine biosynthesis bifunctional protein ArgJ (413 aa).

Residues T158, K184, T195, E285, N408, and S413 each contribute to the substrate site. Residue T195 is the Nucleophile of the active site.

It belongs to the ArgJ family. In terms of assembly, heterotetramer of two alpha and two beta chains.

The protein resides in the cytoplasm. The enzyme catalyses N(2)-acetyl-L-ornithine + L-glutamate = N-acetyl-L-glutamate + L-ornithine. The catalysed reaction is L-glutamate + acetyl-CoA = N-acetyl-L-glutamate + CoA + H(+). It participates in amino-acid biosynthesis; L-arginine biosynthesis; L-ornithine and N-acetyl-L-glutamate from L-glutamate and N(2)-acetyl-L-ornithine (cyclic): step 1/1. Its pathway is amino-acid biosynthesis; L-arginine biosynthesis; N(2)-acetyl-L-ornithine from L-glutamate: step 1/4. Its function is as follows. Catalyzes two activities which are involved in the cyclic version of arginine biosynthesis: the synthesis of N-acetylglutamate from glutamate and acetyl-CoA as the acetyl donor, and of ornithine by transacetylation between N(2)-acetylornithine and glutamate. In Brucella melitensis biotype 1 (strain ATCC 23456 / CCUG 17765 / NCTC 10094 / 16M), this protein is Arginine biosynthesis bifunctional protein ArgJ.